Consider the following 246-residue polypeptide: Serine protease 1 (246 aa).

The first 17 residues, 1–17, serve as a signal peptide directing secretion; that stretch reads MKTFIFLALLGAAVAFP. The propeptide at 18–23 is activation peptide; that stretch reads VDDDDK. The Peptidase S1 domain occupies 24–244; it reads IVGGYTCGAN…YVSWIKQTIA (221 aa). 6 disulfide bridges follow: Cys-30/Cys-160, Cys-48/Cys-64, Cys-132/Cys-233, Cys-139/Cys-206, Cys-171/Cys-185, and Cys-196/Cys-220. The Charge relay system role is filled by His-63. The Ca(2+) site is built by Glu-75, Asn-77, Val-80, and Glu-85. Asp-107 functions as the Charge relay system in the catalytic mechanism. Substrate is bound by residues 194-195, 197-198, and Ser-200; these read DS and QG. The active-site Charge relay system is the Ser-200.

This sequence belongs to the peptidase S1 family. Interacts with SERPINA1. It depends on Ca(2+) as a cofactor. Autocatalytic cleavage after Lys-23 leads to beta-trypsin by releasing a terminal hexapeptide. Subsequent cleavage after Lys-148 leads to alpha-trypsin. Further cleavage after Lys-193 yields pseudotrypsin. A cleavage may also occur after Arg-122. In terms of processing, not sulfated on tyrosine residue(s). In terms of tissue distribution, synthesized in the acinar cells of the pancreas.

It is found in the secreted. The protein resides in the extracellular space. The enzyme catalyses Preferential cleavage: Arg-|-Xaa, Lys-|-Xaa.. Is inhibited by scorpion cyclotide trypsin inhibitor TopI1. The chain is Serine protease 1 (PRSS1) from Bos taurus (Bovine).